Here is a 299-residue protein sequence, read N- to C-terminus: GTPase Era (299 aa).

An Era-type G domain is found at 5–172; the sequence is KSGFVSIIGR…IDVLKTYLPE (168 aa). The tract at residues 13–20 is G1; sequence GRPNVGKS. Residue 13-20 coordinates GTP; sequence GRPNVGKS. The segment at 39 to 43 is G2; that stretch reads QTTRN. The tract at residues 60-63 is G3; that stretch reads DTPG. Residues 60 to 64 and 122 to 125 each bind GTP; these read DTPGI and NKID. The G4 stretch occupies residues 122–125; that stretch reads NKID. A G5 region spans residues 151–153; it reads ISA. Residues 203-280 form the KH type-2 domain; the sequence is TSEEIPHAIG…YLELWVKVQK (78 aa).

Belongs to the TRAFAC class TrmE-Era-EngA-EngB-Septin-like GTPase superfamily. Era GTPase family. As to quaternary structure, monomer.

Its subcellular location is the cytoplasm. The protein resides in the cell membrane. Its function is as follows. An essential GTPase that binds both GDP and GTP, with rapid nucleotide exchange. Plays a role in 16S rRNA processing and 30S ribosomal subunit biogenesis and possibly also in cell cycle regulation and energy metabolism. In Staphylococcus haemolyticus (strain JCSC1435), this protein is GTPase Era.